The sequence spans 378 residues: Conserved oligomeric Golgi complex subunit 8 (378 aa).

The protein belongs to the COG8 family. As to quaternary structure, component of the conserved oligomeric Golgi complex which is composed of eight different subunits and is required for normal Golgi morphology and localization.

The protein resides in the golgi apparatus membrane. Required for normal Golgi function. The chain is Conserved oligomeric Golgi complex subunit 8 (cog8) from Schizosaccharomyces pombe (strain 972 / ATCC 24843) (Fission yeast).